The sequence spans 115 residues: Large ribosomal subunit protein bL19 (115 aa).

Belongs to the bacterial ribosomal protein bL19 family. As to quaternary structure, part of the 50S ribosomal subunit.

Its function is as follows. This protein is located at the 30S-50S ribosomal subunit interface and may play a role in the structure and function of the aminoacyl-tRNA binding site. The chain is Large ribosomal subunit protein bL19 (rplS) from Bacillus subtilis (strain 168).